A 36-amino-acid polypeptide reads, in one-letter code: Pancreatic polypeptide (36 aa).

The residue at position 36 (Tyr36) is a Tyrosine amide.

It belongs to the NPY family.

Its subcellular location is the secreted. Hormone secreted by pancreatic cells that acts as a regulator of pancreatic and gastrointestinal functions probably by signaling through the G protein-coupled receptor NPY4R2. This chain is Pancreatic polypeptide (PPY), found in Macaca mulatta (Rhesus macaque).